Reading from the N-terminus, the 381-residue chain is (S)-scoulerine 9-O-methyltransferase (381 aa).

5 residues coordinate S-adenosyl-L-methionine: G223, E246, D266, M267, and K280. H284 (proton acceptor) is an active-site residue.

The protein belongs to the class I-like SAM-binding methyltransferase superfamily. Cation-independent O-methyltransferase family. COMT subfamily.

The catalysed reaction is (S)-scoulerine + S-adenosyl-L-methionine = (S)-tetrahydrocolumbamine + S-adenosyl-L-homocysteine + H(+). Its function is as follows. Produces a precursor of protoberberine alkaloids. The chain is (S)-scoulerine 9-O-methyltransferase (SMT) from Coptis japonica (Japanese goldthread).